Reading from the N-terminus, the 150-residue chain is Arginine repressor (150 aa).

This sequence belongs to the ArgR family.

Its subcellular location is the cytoplasm. It functions in the pathway amino-acid biosynthesis; L-arginine biosynthesis [regulation]. In terms of biological role, regulates arginine biosynthesis genes. This Clostridium botulinum (strain Loch Maree / Type A3) protein is Arginine repressor.